The following is a 384-amino-acid chain: Spermidine/putrescine import ATP-binding protein PotA (384 aa).

In terms of domain architecture, ABC transporter spans 6 to 238; the sequence is IAFQNVSKVF…PINHFVATFI (233 aa). 40-47 contributes to the ATP binding site; sequence GASGSGKS.

This sequence belongs to the ABC transporter superfamily. Spermidine/putrescine importer (TC 3.A.1.11.1) family. The complex is composed of two ATP-binding proteins (PotA), two transmembrane proteins (PotB and PotC) and a solute-binding protein (PotD).

The protein resides in the cell membrane. The enzyme catalyses ATP + H2O + polyamine-[polyamine-binding protein]Side 1 = ADP + phosphate + polyamineSide 2 + [polyamine-binding protein]Side 1.. Functionally, part of the ABC transporter complex PotABCD involved in spermidine/putrescine import. Responsible for energy coupling to the transport system. The chain is Spermidine/putrescine import ATP-binding protein PotA from Streptococcus thermophilus (strain ATCC BAA-491 / LMD-9).